We begin with the raw amino-acid sequence, 332 residues long: Glycerol-3-phosphate dehydrogenase [NAD(P)+] (332 aa).

3 residues coordinate NADPH: Trp-11, Arg-30, and Lys-108. Lys-108, Gly-137, and Ser-139 together coordinate sn-glycerol 3-phosphate. Ala-141 lines the NADPH pocket. Positions 192, 245, 255, 256, and 257 each coordinate sn-glycerol 3-phosphate. Catalysis depends on Lys-192, which acts as the Proton acceptor. An NADPH-binding site is contributed by Arg-256. 2 residues coordinate NADPH: Val-280 and Glu-282.

Belongs to the NAD-dependent glycerol-3-phosphate dehydrogenase family.

It is found in the cytoplasm. The catalysed reaction is sn-glycerol 3-phosphate + NAD(+) = dihydroxyacetone phosphate + NADH + H(+). The enzyme catalyses sn-glycerol 3-phosphate + NADP(+) = dihydroxyacetone phosphate + NADPH + H(+). It participates in membrane lipid metabolism; glycerophospholipid metabolism. Catalyzes the reduction of the glycolytic intermediate dihydroxyacetone phosphate (DHAP) to sn-glycerol 3-phosphate (G3P), the key precursor for phospholipid synthesis. In Burkholderia orbicola (strain AU 1054), this protein is Glycerol-3-phosphate dehydrogenase [NAD(P)+].